Consider the following 349-residue polypeptide: MITKNIDENLISVIPEDSDDLLNLRRIIKENDKIIGDTTRVLKQDKDYSRPDKGERIKVRIALTVEKISLDDVLDRLRIRGTISESSNESVPHGTHHSFILKINDGITISKKKWLPFEKNLLESSNNQVGFVLVAIDTGDSGIARLRGTHLEFMPNIYSGSGGKRYKTNFNIEKFFEQVQQAISTILKEGDSIVIFGPGETKKRFANFIQKSQNLQKFKVQVVEGIDSGGEDGIYTFTKSNTMKEIMSDSKLAKVSSIIDEVMLLANKKSTKFTMGFDETFNANQMGAVESMVFSDKAIQDDEQKMIDFLNDMENKGVKMYSVDSSTDIGLRVTGLGGIVSLLRYSIES.

The protein belongs to the eukaryotic release factor 1 family. Pelota subfamily. In terms of assembly, monomer. A divalent metal cation serves as cofactor.

It localises to the cytoplasm. May function in recognizing stalled ribosomes, interact with stem-loop structures in stalled mRNA molecules, and effect endonucleolytic cleavage of the mRNA. May play a role in the release non-functional ribosomes and degradation of damaged mRNAs. Has endoribonuclease activity. This chain is Protein pelota homolog, found in Nitrosopumilus maritimus (strain SCM1).